Here is a 331-residue protein sequence, read N- to C-terminus: Homoserine kinase (331 aa).

The protein belongs to the pseudomonas-type ThrB family.

The enzyme catalyses L-homoserine + ATP = O-phospho-L-homoserine + ADP + H(+). It participates in amino-acid biosynthesis; L-threonine biosynthesis; L-threonine from L-aspartate: step 4/5. The protein is Homoserine kinase of Burkholderia thailandensis (strain ATCC 700388 / DSM 13276 / CCUG 48851 / CIP 106301 / E264).